The following is a 136-amino-acid chain: Protein PsiE (136 aa).

4 helical membrane-spanning segments follow: residues 15 to 35 (ILQTVLNLGLLCLGLILVVFL), 55 to 75 (YELVEGLVVYFLYFEFIALIV), 82 to 102 (FHFPLRYFVYIGITAIVRLII), and 108 to 128 (PLDVLIYSAAILLLVITLWLC).

This sequence belongs to the PsiE family.

Its subcellular location is the cell inner membrane. The protein is Protein PsiE of Escherichia coli (strain UTI89 / UPEC).